The primary structure comprises 379 residues: Acetylornithine aminotransferase (379 aa).

Pyridoxal 5'-phosphate contacts are provided by residues 93-94 (GA) and phenylalanine 120. Residue arginine 123 participates in N(2)-acetyl-L-ornithine binding. 205-208 (DEVQ) contacts pyridoxal 5'-phosphate. At lysine 234 the chain carries N6-(pyridoxal phosphate)lysine. N(2)-acetyl-L-ornithine is bound at residue serine 262. Residue threonine 263 coordinates pyridoxal 5'-phosphate.

Belongs to the class-III pyridoxal-phosphate-dependent aminotransferase family. ArgD subfamily. As to quaternary structure, homodimer. Pyridoxal 5'-phosphate serves as cofactor.

It localises to the cytoplasm. It catalyses the reaction N(2)-acetyl-L-ornithine + 2-oxoglutarate = N-acetyl-L-glutamate 5-semialdehyde + L-glutamate. It participates in amino-acid biosynthesis; L-arginine biosynthesis; N(2)-acetyl-L-ornithine from L-glutamate: step 4/4. This chain is Acetylornithine aminotransferase, found in Streptococcus mutans serotype c (strain ATCC 700610 / UA159).